We begin with the raw amino-acid sequence, 310 residues long: N-acetyl-gamma-glutamyl-phosphate reductase (310 aa).

The active site involves Cys-117.

It belongs to the NAGSA dehydrogenase family. Type 2 subfamily.

It is found in the cytoplasm. It carries out the reaction N-acetyl-L-glutamate 5-semialdehyde + phosphate + NADP(+) = N-acetyl-L-glutamyl 5-phosphate + NADPH + H(+). It participates in amino-acid biosynthesis; L-arginine biosynthesis; N(2)-acetyl-L-ornithine from L-glutamate: step 3/4. Its function is as follows. Catalyzes the NADPH-dependent reduction of N-acetyl-5-glutamyl phosphate to yield N-acetyl-L-glutamate 5-semialdehyde. The protein is N-acetyl-gamma-glutamyl-phosphate reductase of Rhizobium meliloti (strain 1021) (Ensifer meliloti).